The following is an 880-amino-acid chain: Dynamin-like protein A (880 aa).

The segment at Met1 to Asp124 is disordered. A compositionally biased stretch (basic and acidic residues) spans Asp8–Glu20. Positions Pro22–Gln31 are enriched in polar residues. A compositionally biased stretch (low complexity) spans Ser32–Thr68. The stretch at Tyr69–Glu152 forms a coiled coil. 2 stretches are compositionally biased toward basic and acidic residues: residues Glu77 to Leu94 and Lys103 to Asp124. Residues Ala191 to Pro478 form the Dynamin-type G domain. The tract at residues Gly201 to Ser208 is G1 motif. Gly201–Ser208 lines the GTP pocket. A G2 motif region spans residues Ile227–Lys240. Residues Asp315 to Gly318 form a G3 motif region. GTP contacts are provided by residues Asp315–Leu319 and Thr380–His383. The G4 motif stretch occupies residues Thr380–His383. Residues Leu413–His416 are G5 motif. Positions Arg479–Lys509 form a coiled coil. A compositionally biased stretch (polar residues) spans Thr532–Thr543. Positions Thr532–Gln551 are disordered. A coiled-coil region spans residues Ser824–Gln861.

Belongs to the TRAFAC class dynamin-like GTPase superfamily. Dynamin/Fzo/YdjA family.

The protein resides in the cytoplasm. The protein localises to the cleavage furrow. The enzyme catalyses GTP + H2O = GDP + phosphate + H(+). Its function is as follows. Involved in cytokinesis. May hydrolyze GTP. The sequence is that of Dynamin-like protein A (dlpA) from Dictyostelium discoideum (Social amoeba).